A 281-amino-acid polypeptide reads, in one-letter code: Elongation factor 1-delta (281 aa).

A2 carries the N-acetylalanine modification. K17 carries the post-translational modification N6-acetyllysine. S37, S44, S60, S86, and S106 each carry phosphoserine. A leucine-zipper region spans residues 80 to 115 (LIVRIASLEVENQNLRGVVQDLQQAISKLEVRLSTL). K107 is subject to N6-acetyllysine. A compositionally biased stretch (polar residues) spans 115–132 (LEKSSPTHRATAPQTQHV). The interval 115-172 (LEKSSPTHRATAPQTQHVSPMRQVEPPAKKGATPAEDDEDNDIDLFGSDEEEEDKEAA) is disordered. K117 bears the N6-acetyllysine; alternate mark. An N6-succinyllysine; alternate modification is found at K117. The residue at position 119 (S119) is a Phosphoserine. The residue at position 129 (T129) is a Phosphothreonine. A Phosphoserine modification is found at S133. At T147 the chain carries Phosphothreonine. The span at 149–169 (AEDDEDNDIDLFGSDEEEEDK) shows a compositional bias: acidic residues. Phosphoserine; by CK2 is present on S162. The catalytic (GEF) stretch occupies residues 173 to 281 (RLREERLRQY…SVDIAAFNKI (109 aa)).

Belongs to the EF-1-beta/EF-1-delta family. As to quaternary structure, EF-1 is composed of 4 subunits: alpha, beta, delta isoform 1, and gamma. Isoform 2 interacts with HSF1 and NFE2L2.

The protein resides in the nucleus. In terms of biological role, EF-1-beta and EF-1-delta stimulate the exchange of GDP bound to EF-1-alpha to GTP, regenerating EF-1-alpha for another round of transfer of aminoacyl-tRNAs to the ribosome. Regulates induction of heat-shock-responsive genes through association with heat shock transcription factors and direct DNA-binding at heat shock promoter elements (HSE). This Rattus norvegicus (Rat) protein is Elongation factor 1-delta (Eef1d).